The chain runs to 317 residues: 2-oxoglutarate and iron-dependent oxygenase domain-containing protein 3 (317 aa).

The tract at residues 1–34 (MATRHRRRGGSAPSWAKPGKPGERPGGPKKSRGR) is disordered. Residues 1 to 39 (MATRHRRRGGSAPSWAKPGKPGERPGGPKKSRGRTSWKS) lie on the Cytoplasmic side of the membrane. The chain crosses the membrane as a helical; Signal-anchor for type II membrane protein span at residues 40–60 (LLIWGVFGVTLGLMAGYYLWG). Residues 61 to 317 (ELITDDSVTE…EHAIGDPTWT (257 aa)) lie on the Lumenal side of the membrane. N-linked (GlcNAc...) asparagine glycans are attached at residues N195 and N213. One can recognise a Fe2OG dioxygenase domain in the interval 205 to 307 (KPTFFSRMNS…AITISFTCNP (103 aa)). Fe cation contacts are provided by H228 and D230. A glycan (N-linked (GlcNAc...) asparagine) is linked at N265. H286 contributes to the Fe cation binding site. The active site involves R296. R296 provides a ligand contact to 2-oxoglutarate.

This sequence belongs to the OGFOD3 family. It depends on Fe(2+) as a cofactor. Requires L-ascorbate as cofactor.

Its subcellular location is the membrane. The polypeptide is 2-oxoglutarate and iron-dependent oxygenase domain-containing protein 3 (ogfod3) (Xenopus tropicalis (Western clawed frog)).